Consider the following 119-residue polypeptide: Large ribosomal subunit protein bL20 (119 aa).

It belongs to the bacterial ribosomal protein bL20 family.

Its function is as follows. Binds directly to 23S ribosomal RNA and is necessary for the in vitro assembly process of the 50S ribosomal subunit. It is not involved in the protein synthesizing functions of that subunit. This Rhodopseudomonas palustris (strain ATCC BAA-98 / CGA009) protein is Large ribosomal subunit protein bL20.